We begin with the raw amino-acid sequence, 312 residues long: UDP-N-acetylenolpyruvoylglucosamine reductase (312 aa).

The 183-residue stretch at 24–206 folds into the FAD-binding PCMH-type domain; the sequence is GIGGPADLFA…SADILKVRNE (183 aa). Arg-166 is a catalytic residue. Ser-217 acts as the Proton donor in catalysis. Glu-307 is a catalytic residue.

It belongs to the MurB family. Requires FAD as cofactor.

It is found in the cytoplasm. It catalyses the reaction UDP-N-acetyl-alpha-D-muramate + NADP(+) = UDP-N-acetyl-3-O-(1-carboxyvinyl)-alpha-D-glucosamine + NADPH + H(+). It participates in cell wall biogenesis; peptidoglycan biosynthesis. In terms of biological role, cell wall formation. The protein is UDP-N-acetylenolpyruvoylglucosamine reductase of Solibacter usitatus (strain Ellin6076).